The sequence spans 664 residues: Fructose-1,6-bisphosphatase class 3 (664 aa).

This sequence belongs to the FBPase class 3 family. The cofactor is Mn(2+).

It catalyses the reaction beta-D-fructose 1,6-bisphosphate + H2O = beta-D-fructose 6-phosphate + phosphate. The protein operates within carbohydrate biosynthesis; gluconeogenesis. The protein is Fructose-1,6-bisphosphatase class 3 of Bacteroides fragilis (strain YCH46).